The chain runs to 269 residues: Shikimate dehydrogenase (NADP(+)) (269 aa).

Shikimate is bound by residues 17–19 and Thr64; that span reads SKS. Lys68 serves as the catalytic Proton acceptor. Glu80 lines the NADP(+) pocket. The shikimate site is built by Asn89 and Asp105. NADP(+) contacts are provided by residues 130 to 134, 154 to 159, and Met213; these read GAGGA and NRTHTK. A shikimate-binding site is contributed by Tyr215. Gly237 is a binding site for NADP(+).

The protein belongs to the shikimate dehydrogenase family. In terms of assembly, homodimer.

It carries out the reaction shikimate + NADP(+) = 3-dehydroshikimate + NADPH + H(+). Its pathway is metabolic intermediate biosynthesis; chorismate biosynthesis; chorismate from D-erythrose 4-phosphate and phosphoenolpyruvate: step 4/7. Functionally, involved in the biosynthesis of the chorismate, which leads to the biosynthesis of aromatic amino acids. Catalyzes the reversible NADPH linked reduction of 3-dehydroshikimate (DHSA) to yield shikimate (SA). The polypeptide is Shikimate dehydrogenase (NADP(+)) (Neisseria mucosa).